Here is an 814-residue protein sequence, read N- to C-terminus: Rho GTPase-activating protein 26 (814 aa).

The 256-residue stretch at 7-262 folds into the BAR domain; it reads EFSDCCLDSP…MKENPLEHKT (256 aa). The PH domain occupies 265-369; sequence PYTMEGYLYV…WMEAMDGREP (105 aa). Residues 383-568 form the Rho-GAP domain; sequence AQLDSIGFSI…ILIENHEKIF (186 aa). Residues 624–648 show a composition bias toward low complexity; that stretch reads LESVSSNPNSILNSSSSLQPNMNSS. Residues 624-696 are disordered; that stretch reads LESVSSNPNS…MPTSSTSSDS (73 aa). Residues 662–672 are compositionally biased toward pro residues; that stretch reads SLPPNPSPTSP. S668 is subject to Phosphoserine. T670 is modified (phosphothreonine). Residue S671 is modified to Phosphoserine. Residues 673-696 are compositionally biased toward low complexity; that stretch reads LSPSWPMFSAPSSPMPTSSTSSDS. The 59-residue stretch at 756-814 folds into the SH3 domain; it reads TPFRKAKALYACKAEHDSELSFTAGTVFDNVHPSQEPGWLEGTLNGKTGLIPENYVEFL.

In terms of assembly, interacts with NYAP1, NYAP2 and MYO16. Interacts with MICAL1 and WDR44. Binds to the C-terminus of PTK2/FAK1. As to quaternary structure, (Microbial infection) Interacts with human parainfluenza virus type 2 proteins P and V. Post-translationally, phosphorylated in a PINK1-dependent fashion promoting retrograde mitochondrial trafficking and clustering.

It localises to the endosome membrane. It is found in the cytoplasm. The protein resides in the cell junction. The protein localises to the focal adhesion. Its subcellular location is the cytoskeleton. Its function is as follows. GTPase-activating protein for RHOA and CDC42. Facilitates mitochondrial quality control by promoting Parkin-mediated recruitment of autophagosomes to damaged mitochondria. Negatively regulates the growth of human parainfluenza virus type 2 by inhibiting hPIV-2-mediated RHOA activation via interaction with two of its viral proteins P and V. Functionally, associates with MICAL1 on the endosomal membrane to promote Rab8-Rab10-dependent tubule extension. After dissociation of MICAL1, recruits WDR44 which connects the endoplasmic reticulum (ER) with the endosomal tubule, thereby participating in the export of a subset of neosynthesized proteins. This Homo sapiens (Human) protein is Rho GTPase-activating protein 26 (ARHGAP26).